The chain runs to 331 residues: Anthranilate phosphoribosyltransferase (331 aa).

Residues Gly-78, Gly-81–Asp-82, Thr-86, Asn-88–Thr-91, Lys-106–Ser-114, and Ser-118 contribute to the 5-phospho-alpha-D-ribose 1-diphosphate site. Residue Gly-78 participates in anthranilate binding. Ser-90 serves as a coordination point for Mg(2+). Asn-109 contributes to the anthranilate binding site. Position 164 (Arg-164) interacts with anthranilate. Residues Asp-222 and Glu-223 each contribute to the Mg(2+) site.

This sequence belongs to the anthranilate phosphoribosyltransferase family. Homodimer. Mg(2+) is required as a cofactor.

It catalyses the reaction N-(5-phospho-beta-D-ribosyl)anthranilate + diphosphate = 5-phospho-alpha-D-ribose 1-diphosphate + anthranilate. It functions in the pathway amino-acid biosynthesis; L-tryptophan biosynthesis; L-tryptophan from chorismate: step 2/5. In terms of biological role, catalyzes the transfer of the phosphoribosyl group of 5-phosphorylribose-1-pyrophosphate (PRPP) to anthranilate to yield N-(5'-phosphoribosyl)-anthranilate (PRA). In Haloarcula marismortui (strain ATCC 43049 / DSM 3752 / JCM 8966 / VKM B-1809) (Halobacterium marismortui), this protein is Anthranilate phosphoribosyltransferase.